The following is a 1310-amino-acid chain: Cadherin-related family member 2 (1310 aa).

The signal sequence occupies residues 1-20 (MAQLWLSCFLLPALVVSVAA). Residues 21–1154 (NVAPKFLANM…ESDLSKQLIS (1134 aa)) lie on the Extracellular side of the membrane. Cadherin domains are found at residues 27–124 (LANM…APVF), 125–241 (QNTA…DPQF), and 242–353 (VREF…KPEF). N-linked (GlcNAc...) asparagine glycans are attached at residues N29, N134, N182, N188, N195, N300, N355, N371, N401, N460, N565, N600, N616, N632, N680, N696, N701, N775, N821, N871, N877, N911, N932, and N1107. 6 Cadherin domains span residues 368-480 (AQVN…RPTF), 481-586 (PQSL…APVV), 586-695 (VSGS…LPIF), 696-808 (NQSS…PPTL), 810-928 (VASL…APYF), and 930-1058 (PENK…TPKE). The helical transmembrane segment at 1155-1175 (VIIGLGVALLLVLVIMTMAFV) threads the bilayer. At 1176 to 1310 (CVRKSYNRKL…TNAGLDTTDL (135 aa)) the chain is on the cytoplasmic side. The interval 1180–1310 (SYNRKLQAMK…TNAGLDTTDL (131 aa)) is mediates interaction with USH1C and MYO7B and is required for proper localization to microvilli tips and function in microvilli organization. Position 1248 is a phosphoserine (S1248). The span at 1259 to 1268 (NSQEIKEHRP) shows a compositional bias: basic and acidic residues. The interval 1259–1310 (NSQEIKEHRPPHTPPEPDPEPLSVVLLGRQAGASGQLEGPSYTNAGLDTTDL) is disordered. Residue S1299 is modified to Phosphoserine. A compositionally biased stretch (polar residues) spans 1299–1310 (SYTNAGLDTTDL).

As to quaternary structure, part of the IMAC/intermicrovillar adhesion complex/intermicrovillar tip-link complex composed of ANKS4B, MYO7B, USH1C, CDHR2 and CDHR5. Interacts with MAST2. Interacts (via cytoplasmic domain) with USH1C and MYO7B; required for proper localization of CDHR2 to microvilli tips and its function in brush border differentiation. Highly expressed in liver, kidney and colon. Moderately expressed in small intestine. Down-regulated in a number of liver and colon cancers. Expressed in duodenum with higher expression in enterocytes along the villus axis and lower expression in crypts (at protein level).

The protein localises to the apical cell membrane. It localises to the cell projection. It is found in the microvillus membrane. Its subcellular location is the cell junction. Its function is as follows. Intermicrovillar adhesion molecule that forms, via its extracellular domain, calcium-dependent heterophilic complexes with CDHR5 on adjacent microvilli. Thereby, controls the packing of microvilli at the apical membrane of epithelial cells. Through its cytoplasmic domain, interacts with microvillus cytoplasmic proteins to form the intermicrovillar adhesion complex/IMAC. This complex plays a central role in microvilli and epithelial brush border differentiation. May also play a role in cell-cell adhesion and contact inhibition in epithelial cells. This chain is Cadherin-related family member 2, found in Homo sapiens (Human).